We begin with the raw amino-acid sequence, 208 residues long: Uracil phosphoribosyltransferase (208 aa).

Residues arginine 78, arginine 103, and 130–138 each bind 5-phospho-alpha-D-ribose 1-diphosphate; that span reads DPMLATGGS. Uracil-binding positions include isoleucine 193 and 198–200; that span reads GDA. Residue aspartate 199 participates in 5-phospho-alpha-D-ribose 1-diphosphate binding.

This sequence belongs to the UPRTase family. Mg(2+) is required as a cofactor.

The catalysed reaction is UMP + diphosphate = 5-phospho-alpha-D-ribose 1-diphosphate + uracil. It participates in pyrimidine metabolism; UMP biosynthesis via salvage pathway; UMP from uracil: step 1/1. With respect to regulation, allosterically activated by GTP. Functionally, catalyzes the conversion of uracil and 5-phospho-alpha-D-ribose 1-diphosphate (PRPP) to UMP and diphosphate. The protein is Uracil phosphoribosyltransferase of Aeromonas salmonicida (strain A449).